A 635-amino-acid chain; its full sequence is Threonine--tRNA ligase (635 aa).

In terms of domain architecture, TGS spans M1 to T61. Residues D242–P533 are catalytic. The Zn(2+) site is built by C333, H384, and H510.

It belongs to the class-II aminoacyl-tRNA synthetase family. In terms of assembly, homodimer. Zn(2+) serves as cofactor.

It localises to the cytoplasm. The enzyme catalyses tRNA(Thr) + L-threonine + ATP = L-threonyl-tRNA(Thr) + AMP + diphosphate + H(+). Catalyzes the attachment of threonine to tRNA(Thr) in a two-step reaction: L-threonine is first activated by ATP to form Thr-AMP and then transferred to the acceptor end of tRNA(Thr). Also edits incorrectly charged L-seryl-tRNA(Thr). The polypeptide is Threonine--tRNA ligase (Rickettsia conorii (strain ATCC VR-613 / Malish 7)).